A 146-amino-acid polypeptide reads, in one-letter code: ATP synthase epsilon chain (146 aa).

This sequence belongs to the ATPase epsilon chain family. F-type ATPases have 2 components, CF(1) - the catalytic core - and CF(0) - the membrane proton channel. CF(1) has five subunits: alpha(3), beta(3), gamma(1), delta(1), epsilon(1). CF(0) has three main subunits: a, b and c.

The protein localises to the cell membrane. Functionally, produces ATP from ADP in the presence of a proton gradient across the membrane. In Lactobacillus helveticus (strain DPC 4571), this protein is ATP synthase epsilon chain.